The following is a 493-amino-acid chain: E3 ubiquitin-protein ligase Hakai (493 aa).

Disordered regions lie at residues 1-20 and 28-61; these read MDHNDNDLQGTNSSASLGGL and IKLISKQTNKTKPAPRAPRAMNRMPAKTQAGDEE. Residues 7–16 are compositionally biased toward polar residues; sequence DLQGTNSSAS. An RING-type zinc finger spans residues 109–149; sequence CDKCGLPIKMYGRMIPCKHVFCYDCAILHEKKGDKMCPGCN. The segment at 148 to 206 is HYB domain; it reads CNEPVQRIEQCVRGSLFMCSIVQGCKRTYLSQRDLQAHINHRHMRAGKPVTRPPLEPVH. The C2H2-type zinc finger occupies 164 to 190; it reads FMCSIVQGCKRTYLSQRDLQAHINHRH. The disordered stretch occupies residues 253–493; that stretch reads YNQPHEDIRP…DQARYRPYYQ (241 aa). Composition is skewed to pro residues over residues 262–276, 342–352, 372–389, and 399–412; these read PPPAEMSMAPPPPRP, APPPPPPPPIS, APPPPMTSAPPPITPPPG, and MNHPPPGPPPPQHG. The span at 427–444 shows a compositional bias: polar residues; the sequence is NPNSLPQFSEDQGTLSPP. Residues 459 to 469 show a composition bias toward pro residues; that stretch reads PRGPPPPPRMQ. Residues 470-480 show a composition bias toward low complexity; it reads GPPAQAPLAGP.

The protein belongs to the Hakai family. As to quaternary structure, homodimer. Interacts with tyrosine-phosphorylated SRC substrates. Component of the WMM complex, a N6-methyltransferase complex composed of a catalytic subcomplex, named MAC, and of an associated subcomplex, named MACOM. Component of the MACOM subcomplex.

It is found in the nucleus speckle. Its subcellular location is the nucleus. The protein resides in the nucleoplasm. It catalyses the reaction S-ubiquitinyl-[E2 ubiquitin-conjugating enzyme]-L-cysteine + [acceptor protein]-L-lysine = [E2 ubiquitin-conjugating enzyme]-L-cysteine + N(6)-ubiquitinyl-[acceptor protein]-L-lysine.. The protein operates within protein modification; protein ubiquitination. Functionally, E3 ubiquitin-protein ligase that mediates ubiquitination of several tyrosine-phosphorylated Src substrates. Associated component of the WMM complex, a complex that mediates N6-methyladenosine (m6A) methylation of RNAs, a modification that plays a role in the efficiency of mRNA splicing and RNA processing. This is E3 ubiquitin-protein ligase Hakai from Gallus gallus (Chicken).